Here is a 304-residue protein sequence, read N- to C-terminus: Non-specific ribonucleoside hydrolase RihC (304 aa).

His-233 is an active-site residue.

It belongs to the IUNH family. RihC subfamily.

Functionally, hydrolyzes both purine and pyrimidine ribonucleosides with a broad-substrate specificity. The polypeptide is Non-specific ribonucleoside hydrolase RihC (Escherichia coli O157:H7).